The chain runs to 115 residues: DNA-directed RNA polymerase subunit Rpo4 (115 aa).

The protein belongs to the eukaryotic RPB4 RNA polymerase subunit family. Part of the RNA polymerase complex. Forms a stalk with Rpo7 that extends from the main structure.

Its subcellular location is the cytoplasm. The catalysed reaction is RNA(n) + a ribonucleoside 5'-triphosphate = RNA(n+1) + diphosphate. Functionally, DNA-dependent RNA polymerase (RNAP) catalyzes the transcription of DNA into RNA using the four ribonucleoside triphosphates as substrates. This subunit is less well bound than the others. This Methanocaldococcus jannaschii (strain ATCC 43067 / DSM 2661 / JAL-1 / JCM 10045 / NBRC 100440) (Methanococcus jannaschii) protein is DNA-directed RNA polymerase subunit Rpo4.